The chain runs to 343 residues: Heat-inducible transcription repressor HrcA (343 aa).

The protein belongs to the HrcA family.

Functionally, negative regulator of class I heat shock genes (grpE-dnaK-dnaJ and groELS operons). Prevents heat-shock induction of these operons. This chain is Heat-inducible transcription repressor HrcA, found in Thermoanaerobacter pseudethanolicus (strain ATCC 33223 / 39E) (Clostridium thermohydrosulfuricum).